Consider the following 261-residue polypeptide: MSYTARAAKHPSPVAQRLLRLMDTKKTNLCASVDVKTTAEFLSLIDKLGPYICLVKTHIDIIDDFSFDGTIKPLLELAKKHNFMIFEDRKFADIGNTVKSQYSGGVYKIAQWSDITNAHGITGAGIVNGLKEAAQETTSEPRGLLMLAELSSKGSLAYGEYTEKTVEIAKSDKEFVVGFIAQRDMGGRDEGFDWLIMTPGVGLDDKGDALGQQYRTVNEVISTGTDIIIVGRGLFGKGRDPEVEGKRYRDAGWKAYQKRLQ.

Substrate contacts are provided by residues Asp34, Lys56–His58, Asp88–Thr97, Tyr214, and Arg232. Catalysis depends on Lys90, which acts as the Proton donor.

Belongs to the OMP decarboxylase family.

The catalysed reaction is orotidine 5'-phosphate + H(+) = UMP + CO2. The protein operates within pyrimidine metabolism; UMP biosynthesis via de novo pathway; UMP from orotate: step 2/2. This is Orotidine 5'-phosphate decarboxylase (URA3) from Kodamaea ohmeri (Yeast).